The primary structure comprises 132 residues: Cytochrome c' (132 aa).

6 residues coordinate heme c: Arg10, Gln11, Asp65, Cys122, Cys125, and His126.

In terms of processing, binds 1 heme c group covalently per subunit.

In terms of biological role, cytochrome c' is the most widely occurring bacterial c-type cytochrome. Cytochromes c' are high-spin proteins and the heme has no sixth ligand. Their exact function is not known. This chain is Cytochrome c', found in Halomonas halodenitrificans (strain ATCC 12084 / NCIMB 8669) (Paracoccus halodenitrificans).